We begin with the raw amino-acid sequence, 764 residues long: Semaphorin-3D (764 aa).

An N-terminal signal peptide occupies residues 1-41 (MKTAGEPDRRRQRRQVRTGRFSCAWWSTSVMLFFSLPEGNC). Residues 48–535 (RVKLGYKDLI…GSDGLVQVSL (488 aa)) enclose the Sema domain. Cys121 and Cys132 are disulfide-bonded. N-linked (GlcNAc...) asparagine glycosylation is present at Asn143. 3 cysteine pairs are disulfide-bonded: Cys150–Cys159, Cys290–Cys402, and Cys314–Cys362. N-linked (GlcNAc...) asparagine glycosylation is present at Asn490. A disulfide bond links Cys538 and Cys556. Asn610 carries an N-linked (GlcNAc...) asparagine glycan. The Ig-like C2-type domain occupies 661–740 (GDAGSYFCTS…EYCETMWHRE (80 aa)). A disulfide bridge links Cys668 with Cys733. The disordered stretch occupies residues 743–764 (QKQKGKWKHVQELRKSRNRRHH).

Belongs to the semaphorin family.

The protein localises to the secreted. May play a role in the guidance of several axon pathways. In Danio rerio (Zebrafish), this protein is Semaphorin-3D (sema3d).